Reading from the N-terminus, the 195-residue chain is Peptidyl-tRNA hydrolase (195 aa).

Tyrosine 17 contacts tRNA. The Proton acceptor role is filled by histidine 22. Positions 68, 70, and 116 each coordinate tRNA.

The protein belongs to the PTH family. Monomer.

It localises to the cytoplasm. The catalysed reaction is an N-acyl-L-alpha-aminoacyl-tRNA + H2O = an N-acyl-L-amino acid + a tRNA + H(+). Hydrolyzes ribosome-free peptidyl-tRNAs (with 1 or more amino acids incorporated), which drop off the ribosome during protein synthesis, or as a result of ribosome stalling. Functionally, catalyzes the release of premature peptidyl moieties from peptidyl-tRNA molecules trapped in stalled 50S ribosomal subunits, and thus maintains levels of free tRNAs and 50S ribosomes. In Erwinia tasmaniensis (strain DSM 17950 / CFBP 7177 / CIP 109463 / NCPPB 4357 / Et1/99), this protein is Peptidyl-tRNA hydrolase.